A 287-amino-acid polypeptide reads, in one-letter code: MAGAKEIRSKIASVQNTQKITKAMEMVAASKMRKSQDRMAASRPYADTMRKVIGHLANGNLEYKHPYLEERDVKRVGYLVVSTDRGLCGGLNINLFKKLLADMKAWSDKGVQCDLAMIGSKGVSFFSSVGGNVVAQVTGMGDNPSLSELIGPVKVMLQAYDEGRLDKLYIVSNKFINTMSQVPTITQLLPLPASEDDELKRKTWDYLYEPDPKALLDTLLRRYVESQVYQGVVENLASEQAARMVSMKAATDNGGSLIKELQLVYNKARQASITQELTEIVGGASAV.

Belongs to the ATPase gamma chain family. F-type ATPases have 2 components, CF(1) - the catalytic core - and CF(0) - the membrane proton channel. CF(1) has five subunits: alpha(3), beta(3), gamma(1), delta(1), epsilon(1). CF(0) has three main subunits: a, b and c.

It localises to the cell inner membrane. Functionally, produces ATP from ADP in the presence of a proton gradient across the membrane. The gamma chain is believed to be important in regulating ATPase activity and the flow of protons through the CF(0) complex. This is ATP synthase gamma chain from Citrobacter koseri (strain ATCC BAA-895 / CDC 4225-83 / SGSC4696).